A 362-amino-acid polypeptide reads, in one-letter code: Ribosomal RNA large subunit methyltransferase F (362 aa).

Positions 1 to 28 are enriched in basic residues; that stretch reads MNTPLKPKHGQKTNRKPKANKPVVKKQQ. Residues 1 to 40 form a disordered region; sequence MNTPLKPKHGQKTNRKPKANKPVVKKQQTKQPPTHKVQGE.

Belongs to the methyltransferase superfamily. METTL16/RlmF family.

It localises to the cytoplasm. It carries out the reaction adenosine(1618) in 23S rRNA + S-adenosyl-L-methionine = N(6)-methyladenosine(1618) in 23S rRNA + S-adenosyl-L-homocysteine + H(+). Specifically methylates the adenine in position 1618 of 23S rRNA. The protein is Ribosomal RNA large subunit methyltransferase F of Vibrio cholerae serotype O1 (strain M66-2).